The chain runs to 235 residues: Small ribosomal subunit protein eS6 (235 aa).

The interval 190-212 is disordered; sequence GFHPRERGERRRKSVRGRMIPDP.

This sequence belongs to the eukaryotic ribosomal protein eS6 family.

The sequence is that of Small ribosomal subunit protein eS6 from Aeropyrum pernix (strain ATCC 700893 / DSM 11879 / JCM 9820 / NBRC 100138 / K1).